The primary structure comprises 155 residues: MPSIDGTTGNLPSGRVAIIASRYNANICDSMVQAALQSLSDAGIPEDKQWLIRVPGAWELCWAVEQAFQHADVIGAITLGCVIKGETTHDEHINRAVSDTLMEQAVRSGRPVGFGLLTCNTVEQAIQRSGGAVGNKGHEAADAMLEMLRLQTKMR.

5-amino-6-(D-ribitylamino)uracil contacts are provided by residues tyrosine 23, 57–59 (AWE), and 81–83 (CVI). 86-87 (ET) contributes to the (2S)-2-hydroxy-3-oxobutyl phosphate binding site. The Proton donor role is filled by histidine 89. Phenylalanine 114 lines the 5-amino-6-(D-ribitylamino)uracil pocket. A (2S)-2-hydroxy-3-oxobutyl phosphate-binding site is contributed by arginine 128.

It belongs to the DMRL synthase family.

The enzyme catalyses (2S)-2-hydroxy-3-oxobutyl phosphate + 5-amino-6-(D-ribitylamino)uracil = 6,7-dimethyl-8-(1-D-ribityl)lumazine + phosphate + 2 H2O + H(+). The protein operates within cofactor biosynthesis; riboflavin biosynthesis; riboflavin from 2-hydroxy-3-oxobutyl phosphate and 5-amino-6-(D-ribitylamino)uracil: step 1/2. Functionally, catalyzes the formation of 6,7-dimethyl-8-ribityllumazine by condensation of 5-amino-6-(D-ribitylamino)uracil with 3,4-dihydroxy-2-butanone 4-phosphate. This is the penultimate step in the biosynthesis of riboflavin. This chain is 6,7-dimethyl-8-ribityllumazine synthase, found in Rhodopirellula baltica (strain DSM 10527 / NCIMB 13988 / SH1).